Consider the following 356-residue polypeptide: Probable arabinogalactan endo-beta-1,4-galactanase A (356 aa).

Residues 1 to 21 (MLGKMILLPLFVLLCHSLASA) form the signal peptide. The N-linked (GlcNAc...) asparagine glycan is linked to asparagine 133. The Proton donor role is filled by glutamate 157. The active-site Nucleophile is the glutamate 268.

It belongs to the glycosyl hydrolase 53 family.

Its subcellular location is the secreted. The catalysed reaction is The enzyme specifically hydrolyzes (1-&gt;4)-beta-D-galactosidic linkages in type I arabinogalactans.. Its function is as follows. Endogalactanase involved in the degradation of plant cell wall polysaccharides, and more particularly of hairy regions of pectin. This is Probable arabinogalactan endo-beta-1,4-galactanase A (galA) from Neosartorya fischeri (strain ATCC 1020 / DSM 3700 / CBS 544.65 / FGSC A1164 / JCM 1740 / NRRL 181 / WB 181) (Aspergillus fischerianus).